Reading from the N-terminus, the 449-residue chain is Phosphoglucosamine mutase (449 aa).

Catalysis depends on Ser101, which acts as the Phosphoserine intermediate. Residues Ser101, Asp240, Asp242, and Asp244 each coordinate Mg(2+). Ser101 is modified (phosphoserine).

Belongs to the phosphohexose mutase family. Requires Mg(2+) as cofactor. In terms of processing, activated by phosphorylation.

The catalysed reaction is alpha-D-glucosamine 1-phosphate = D-glucosamine 6-phosphate. Its function is as follows. Catalyzes the conversion of glucosamine-6-phosphate to glucosamine-1-phosphate. The polypeptide is Phosphoglucosamine mutase (Streptococcus mutans serotype c (strain ATCC 700610 / UA159)).